We begin with the raw amino-acid sequence, 159 residues long: Putative ribosomal RNA large subunit methyltransferase H (159 aa).

Residues L76, G108, and 127-132 (FSKMTF) contribute to the S-adenosyl-L-methionine site.

It belongs to the RNA methyltransferase RlmH family.

The protein resides in the cytoplasm. It carries out the reaction pseudouridine(1915) in 23S rRNA + S-adenosyl-L-methionine = N(3)-methylpseudouridine(1915) in 23S rRNA + S-adenosyl-L-homocysteine + H(+). Its function is as follows. Specifically methylates the pseudouridine at position 1915 (m3Psi1915) in 23S rRNA. In Methanococcus maripaludis (strain C7 / ATCC BAA-1331), this protein is Putative ribosomal RNA large subunit methyltransferase H.